We begin with the raw amino-acid sequence, 1169 residues long: Integrin alpha-X (1169 aa).

Residues 1–19 (MSCTWIAFLLLLGFVSCLG) form the signal peptide. At 20–1116 (FNLDAEKLTH…EMYKVHNPVP (1097 aa)) the chain is on the extracellular side. FG-GAP repeat units follow at residues 23 to 78 (DAEK…NCEP) and 79 to 138 (ISLQ…QSQN). A disulfide bond links C69 and C76. An N-linked (GlcNAc...) asparagine glycan is attached at N89. 2 cysteine pairs are disulfide-bonded: C108/C126 and C116/C146. In terms of domain architecture, VWFA spans 152-330 (DIVFLIDGSG…DALKDIENQL (179 aa)). Positions 158, 160, 162, and 260 each coordinate Mg(2+). An N-linked (GlcNAc...) asparagine glycan is attached at N267. FG-GAP repeat units lie at residues 341-392 (ETPS…PTFI), 393-444 (NMSQ…SRHW), 445-505 (RPKS…GSRW), 508-566 (GTTL…QDIA), and 571-631 (QRIS…FTPA). N393 carries N-linked (GlcNAc...) asparagine glycosylation. Positions 467, 469, 471, and 475 each coordinate Ca(2+). Cysteines 496 and 507 form a disulfide. Residues D531, N533, D535, D539, D594, D598, and D602 each contribute to the Ca(2+) site. Disulfide bonds link C640–C721 and C656–C711. The N-linked (GlcNAc...) asparagine glycan is linked to N734. Cystine bridges form between C770-C776 and C858-C873. Residue N949 is glycosylated (N-linked (GlcNAc...) asparagine). 2 cysteine pairs are disulfide-bonded: C1007–C1031 and C1036–C1041. 2 N-linked (GlcNAc...) asparagine glycosylation sites follow: N1059 and N1084. A helical membrane pass occupies residues 1117–1137 (LIVGSSVGGLLLLAIITAILY). The Cytoplasmic portion of the chain corresponds to 1138–1169 (KAGFFKRQYKEMLEEANGQFVSDGTPTPQVAQ). A GFFKR motif motif is present at residues 1140 to 1144 (GFFKR).

It belongs to the integrin alpha chain family. As to quaternary structure, heterodimer of an alpha and a beta subunit. Alpha-X associates with beta-2.

It localises to the membrane. Its function is as follows. Integrin alpha-X/beta-2 is a receptor for fibrinogen. It recognizes the sequence G-P-R in fibrinogen. It mediates cell-cell interaction during inflammatory responses. It is especially important in monocyte adhesion and chemotaxis. In Mus musculus (Mouse), this protein is Integrin alpha-X (Itgax).